We begin with the raw amino-acid sequence, 337 residues long: UDP-3-O-acylglucosamine N-acyltransferase (337 aa).

The Proton acceptor role is filled by His-238.

This sequence belongs to the transferase hexapeptide repeat family. LpxD subfamily. Homotrimer.

The enzyme catalyses a UDP-3-O-[(3R)-3-hydroxyacyl]-alpha-D-glucosamine + a (3R)-hydroxyacyl-[ACP] = a UDP-2-N,3-O-bis[(3R)-3-hydroxyacyl]-alpha-D-glucosamine + holo-[ACP] + H(+). It participates in bacterial outer membrane biogenesis; LPS lipid A biosynthesis. Functionally, catalyzes the N-acylation of UDP-3-O-acylglucosamine using 3-hydroxyacyl-ACP as the acyl donor. Is involved in the biosynthesis of lipid A, a phosphorylated glycolipid that anchors the lipopolysaccharide to the outer membrane of the cell. This chain is UDP-3-O-acylglucosamine N-acyltransferase, found in Xanthomonas euvesicatoria pv. vesicatoria (strain 85-10) (Xanthomonas campestris pv. vesicatoria).